We begin with the raw amino-acid sequence, 106 residues long: Urease subunit beta (106 aa).

It belongs to the urease beta subunit family. Heterotrimer of UreA (gamma), UreB (beta) and UreC (alpha) subunits. Three heterotrimers associate to form the active enzyme.

Its subcellular location is the cytoplasm. The catalysed reaction is urea + 2 H2O + H(+) = hydrogencarbonate + 2 NH4(+). The protein operates within nitrogen metabolism; urea degradation; CO(2) and NH(3) from urea (urease route): step 1/1. This chain is Urease subunit beta, found in Escherichia coli O157:H7.